Consider the following 914-residue polypeptide: Probable dipeptidyl-aminopeptidase B (914 aa).

The interval 1 to 82 is disordered; sequence MGAEKRINDE…GLPPPSGAQR (82 aa). The Cytoplasmic portion of the chain corresponds to 1–88; sequence MGAEKRINDE…GAQRTPKKVS (88 aa). Over residues 26 to 38 the composition is skewed to low complexity; that stretch reads DSTSTASISLALI. A helical; Signal-anchor for type II membrane protein transmembrane segment spans residues 89-109; that stretch reads IIFWLVAALCVGGWLVAFFVF. The Vacuolar portion of the chain corresponds to 110–914; that stretch reads MGSPKKDSDK…RSLLKRMSNA (805 aa). N-linked (GlcNAc...) asparagine glycans are attached at residues N128, N295, N347, and N617. S751 (charge relay system) is an active-site residue. N-linked (GlcNAc...) asparagine glycosylation is present at N810. Residues D828 and H861 each act as charge relay system in the active site. N-linked (GlcNAc...) asparagine glycosylation occurs at N897.

It belongs to the peptidase S9B family.

It localises to the vacuole membrane. The enzyme catalyses Release of an N-terminal dipeptide, Xaa-Yaa-|-Zaa-, from a polypeptide, preferentially when Yaa is Pro, provided Zaa is neither Pro nor hydroxyproline.. Its function is as follows. Type IV dipeptidyl-peptidase which removes N-terminal dipeptides sequentially from polypeptides having unsubstituted N-termini provided that the penultimate residue is proline. The sequence is that of Probable dipeptidyl-aminopeptidase B (DAPB) from Uncinocarpus reesii (strain UAMH 1704).